Reading from the N-terminus, the 214-residue chain is NADH-quinone oxidoreductase subunit C (214 aa).

Belongs to the complex I 30 kDa subunit family. In terms of assembly, NDH-1 is composed of 14 different subunits. Subunits NuoB, C, D, E, F, and G constitute the peripheral sector of the complex.

It is found in the cell inner membrane. It carries out the reaction a quinone + NADH + 5 H(+)(in) = a quinol + NAD(+) + 4 H(+)(out). Its function is as follows. NDH-1 shuttles electrons from NADH, via FMN and iron-sulfur (Fe-S) centers, to quinones in the respiratory chain. The immediate electron acceptor for the enzyme in this species is believed to be ubiquinone. Couples the redox reaction to proton translocation (for every two electrons transferred, four hydrogen ions are translocated across the cytoplasmic membrane), and thus conserves the redox energy in a proton gradient. The protein is NADH-quinone oxidoreductase subunit C of Francisella tularensis subsp. novicida (strain U112).